A 319-amino-acid polypeptide reads, in one-letter code: Ribonuclease Z (319 aa).

H62, H64, D66, H67, H145, D215, and H273 together coordinate Zn(2+). D66 serves as the catalytic Proton acceptor.

It belongs to the RNase Z family. As to quaternary structure, homodimer. It depends on Zn(2+) as a cofactor.

It carries out the reaction Endonucleolytic cleavage of RNA, removing extra 3' nucleotides from tRNA precursor, generating 3' termini of tRNAs. A 3'-hydroxy group is left at the tRNA terminus and a 5'-phosphoryl group is left at the trailer molecule.. Functionally, zinc phosphodiesterase, which displays some tRNA 3'-processing endonuclease activity. Probably involved in tRNA maturation, by removing a 3'-trailer from precursor tRNA. The protein is Ribonuclease Z of Borrelia duttonii (strain Ly).